A 127-amino-acid chain; its full sequence is Large ribosomal subunit protein bL20 (127 aa).

It belongs to the bacterial ribosomal protein bL20 family.

Functionally, binds directly to 23S ribosomal RNA and is necessary for the in vitro assembly process of the 50S ribosomal subunit. It is not involved in the protein synthesizing functions of that subunit. The polypeptide is Large ribosomal subunit protein bL20 (Bifidobacterium longum (strain DJO10A)).